The primary structure comprises 200 residues: uncharacterized protein (200 aa).

Positions 1–24 (MAIDKLPLLLFLSILLCLNRPVLS) are cleaved as a signal peptide. N44, N72, N99, N124, and N135 each carry an N-linked (GlcNAc...) asparagine glycan. The GPI-anchor amidated serine moiety is linked to residue S174. A propeptide spans 175-200 (NGFTFGIGLVSYLVIFMYSSFCFFLF) (removed in mature form).

It belongs to the UPF0277 family.

The protein localises to the cell membrane. This is an uncharacterized protein from Arabidopsis thaliana (Mouse-ear cress).